Consider the following 713-residue polypeptide: MAPSVDSIATSVANSLSNGLHAAAAANGGDVHKKTAGAGSLLPTTETTQLDIVERILADAGATDQIKLDGYTLTLGDVVGAARRGRSVKVADSPHIREKIDASVEFLRTQLDNSVYGVTTGFGGSADTRTEDAISLQKALLEHQLCGVLPTSMDGFALGRGLENSLPLEVVRGAMTIRVNSLTRGHSAVRIVVLEALTNFLNHGITPIVPLRGTISASGDLSPLSYIAASITGHPDSKVHVDGKIMSAQEAIALKGLQPVVLGPKEGLGLVNGTAVSASMATLALTDAHVLSLLAQALTALTVEAMVGHAGSFHPFLHDVTRPHPTQIEVARNIRTLLEGSKYAVHHETEVKVKDDEGILRQDRYPLRCSPQWLGPLVSDMIHAHAVLSLEAGQSTTDNPLIDLENKMTHHGGAFMASSVGNTMEKTRLAVALMGKVSFTQLTEMLNAGMNRALPSCLAAEDPSLSYHCKGLDIAAAAYTSELGHLANPVSTHVQPAEMGNQAINSLALISARRTAEANDVLSLLLATHLYCVLQAVDLRAMEFEHTKAFEPMVTELLKQHFGALATAEVEDKVRKSIYKRLQQNNSYDLEQRWHDTFSVATGAVVEALAGQEVSLASLNAWKVACAEKAIALTRSVRDSFWAAPSSSSPALKYLSPRTRVLYSFVREEVGVKARRGDVYLGKQEVTIGTNVSRIYEAIKSGCIAPVLVKMMA.

Catalysis depends on tyrosine 116, which acts as the Proton donor/acceptor. Positions 217 to 219 (ASG) form a cross-link, 5-imidazolinone (Ala-Gly). Serine 218 is subject to 2,3-didehydroalanine (Ser). Residues asparagine 272, glutamine 362, arginine 368, asparagine 399, lysine 470, glutamate 498, and asparagine 501 each contribute to the (E)-cinnamate site.

This sequence belongs to the PAL/histidase family. In terms of assembly, homotetramer. Contains an active site 4-methylidene-imidazol-5-one (MIO), which is formed autocatalytically by cyclization and dehydration of residues Ala-Ser-Gly.

The protein resides in the cytoplasm. The catalysed reaction is L-phenylalanine = (E)-cinnamate + NH4(+). The protein operates within phenylpropanoid metabolism; trans-cinnamate biosynthesis; trans-cinnamate from L-phenylalanine: step 1/1. Its function is as follows. Catalyzes the non-oxidative deamination of L-phenylalanine to form trans-cinnamic acid and a free ammonium ion. Facilitates the commitment step in phenylpropanoid pathways that produce secondary metabolites such as lignins, coumarins and flavonoids. This is Phenylalanine ammonia-lyase (PAL) from Rhodotorula mucilaginosa (Yeast).